The sequence spans 125 residues: Large ribosomal subunit protein eL31 (125 aa).

Methionine 1 bears the N-acetylmethionine mark. Serine 15 bears the Phosphoserine mark. An N6-succinyllysine mark is found at lysine 55 and lysine 70. Lysine 75 carries the N6-acetyllysine; alternate modification. Lysine 75 bears the N6-succinyllysine; alternate mark. Serine 98 carries the phosphoserine modification.

It belongs to the eukaryotic ribosomal protein eL31 family. Component of the large ribosomal subunit.

It localises to the cytoplasm. Functionally, component of the large ribosomal subunit. The ribosome is a large ribonucleoprotein complex responsible for the synthesis of proteins in the cell. This is Large ribosomal subunit protein eL31 (RPL31) from Pongo abelii (Sumatran orangutan).